Here is a 199-residue protein sequence, read N- to C-terminus: Guanylate kinase (199 aa).

One can recognise a Guanylate kinase-like domain in the interval 20 to 198; sequence GKLIVLTGPS…ALQAIEVALF (179 aa). 27–34 serves as a coordination point for ATP; that stretch reads GPSGVGKG.

The protein belongs to the guanylate kinase family.

It localises to the cytoplasm. The catalysed reaction is GMP + ATP = GDP + ADP. In terms of biological role, essential for recycling GMP and indirectly, cGMP. The chain is Guanylate kinase from Trichormus variabilis (strain ATCC 29413 / PCC 7937) (Anabaena variabilis).